A 535-amino-acid polypeptide reads, in one-letter code: MELDLSPSHLSSSPEDVCPTPGTPPETPPPPDNPPPGDVKRSQPLPIPSSRKLREEEFQATSLPSIPNPFPELCSPPSQKPILGGSSGARGLLPRDSSRLCVVKVYSEDGACRSVEVAAGATARHVCEMLVQRAHALSDENWGLVECHPYLALERGLEDHESVVEVQEAWPVGGDSRFIFRKNFAKYELFKSPPHTLFPEKMVSSCLDTPTGISHEDLIQNFLNAGSFPEIQGFLQLRGSGRGSGRKLWKRFFCFLRRSGLYYSTKGTSKDPRHLQYVADINESNVYVVTQGRKLYGIPTDFGFCVKPNKLRNGHKGLHIFCSEDEQSRTCWLSAFRLFKYGVQLYKNYQQAQSRHLRLSYLGSPPLRSVSDNTLVAMDFSGHAGRVIENPQEALSAATEEAQAWRKKTNHRLSLPTPCSGLSLSAAIHRTQPWFHGRISREESQRLIGQQGLVDGVFLVRESQRNPQGFVLSLCHLQKVKHYLILPSEDEGCLYFSMDDGQTRFTDLLQLVEFHQLNRGILPCLLRHCCARVAL.

Residues 1–20 (MELDLSPSHLSSSPEDVCPT) show a composition bias toward low complexity. The segment at 1 to 89 (MELDLSPSHL…KPILGGSSGA (89 aa)) is disordered. Residues 21–37 (PGTPPETPPPPDNPPPG) show a composition bias toward pro residues. A Ras-associating domain is found at 99–185 (RLCVVKVYSE…SRFIFRKNFA (87 aa)). Y187 and Y341 each carry phosphotyrosine; by FAK1. Residues 228-341 (FPEIQGFLQL…WLSAFRLFKY (114 aa)) enclose the PH domain. At S364 the chain carries Phosphoserine. One can recognise an SH2 domain in the interval 434–530 (WFHGRISREE…ILPCLLRHCC (97 aa)).

It belongs to the GRB7/10/14 family. In terms of assembly, homodimer. Interacts (via SH2 domain) with EGFR, ERBB2, ERBB3 (when phosphorylated), ERBB4 (when phosphorylated), EPHB1, INSR, FGFR1, PDGFRA (tyrosine phosphorylated) and PDGFRB (tyrosine phosphorylated). Interacts with SHC1. Interacts with RND1. Interacts (when tyrosine phosphorylated) with FHL2 and HAX1. Interacts (via SH2 domain) with RET and PTK2/FAK1. Interacts (when not phosphorylated) with ELAVL1. In stressed cells, but not in normal cells, part of a complex that contains at least GRB7, PTK2/FAK1, STAU1, ELAVL1 and TIA1. Interacts (via SH2 domain) with KIT (phosphorylated). Interacts (via SH2 domain) with TEK/TIE2 (tyrosine phosphorylated). Phosphorylated on serine and threonine residues in response to activation of receptor kinases. Phosphorylated on tyrosine residues by TEK/TIE2. Phosphorylated on tyrosine residues by PTK2/FAK1, and possibly also other kinases. Phosphorylation is enhanced by activation of receptor kinases by a cognate ligand. Tyrosine phosphorylation is essential for activation of down-stream protein kinases. Phosphorylation decreases affinity for target mRNA molecules. In terms of tissue distribution, detected in liver, kidney and placenta, and at lower levels in lung.

It localises to the cytoplasm. It is found in the cell projection. The protein resides in the cell junction. Its subcellular location is the focal adhesion. The protein localises to the cell membrane. It localises to the cytoplasmic granule. Its function is as follows. Adapter protein that interacts with the cytoplasmic domain of numerous receptor kinases and modulates down-stream signaling. Promotes activation of down-stream protein kinases, including STAT3, AKT1, MAPK1 and/or MAPK3. Promotes activation of HRAS. Plays a role in signal transduction in response to EGF. Plays a role in the regulation of cell proliferation and cell migration. Plays a role in the assembly and stability of RNA stress granules. Binds to the 5'UTR of target mRNA molecules and represses translation of target mRNA species, when not phosphorylated. Phosphorylation impairs RNA binding and promotes stress granule disassembly during recovery after cellular stress. The polypeptide is Growth factor receptor-bound protein 7 (Grb7) (Rattus norvegicus (Rat)).